The chain runs to 311 residues: 4-hydroxy-tetrahydrodipicolinate synthase (311 aa).

Thr-49 contacts pyruvate. The active-site Proton donor/acceptor is the Tyr-138. Lys-166 serves as the catalytic Schiff-base intermediate with substrate. Ile-207 contributes to the pyruvate binding site.

This sequence belongs to the DapA family. In terms of assembly, homotetramer; dimer of dimers.

The protein localises to the cytoplasm. It catalyses the reaction L-aspartate 4-semialdehyde + pyruvate = (2S,4S)-4-hydroxy-2,3,4,5-tetrahydrodipicolinate + H2O + H(+). It participates in amino-acid biosynthesis; L-lysine biosynthesis via DAP pathway; (S)-tetrahydrodipicolinate from L-aspartate: step 3/4. Its function is as follows. Catalyzes the condensation of (S)-aspartate-beta-semialdehyde [(S)-ASA] and pyruvate to 4-hydroxy-tetrahydrodipicolinate (HTPA). This chain is 4-hydroxy-tetrahydrodipicolinate synthase, found in Lactobacillus acidophilus (strain ATCC 700396 / NCK56 / N2 / NCFM).